Reading from the N-terminus, the 375-residue chain is 4,4'-diaponeurosporenoate glycosyltransferase (375 aa).

4 consecutive transmembrane segments (helical) span residues 3–23 (WLSR…ALIF), 164–184 (FYEG…NVFS), 277–297 (IMTA…GLCL), and 330–350 (FSNL…KIFI).

The protein belongs to the glycosyltransferase 2 family. CrtQ subfamily.

The protein resides in the cell membrane. The protein operates within carotenoid biosynthesis; staphyloxanthin biosynthesis; staphyloxanthin from farnesyl diphosphate: step 4/5. Catalyzes the glycosylation of 4,4'-diaponeurosporenoate, i.e. the esterification of glucose at the C1'' position with the carboxyl group of 4,4'-diaponeurosporenic acid, to form glycosyl-4,4'-diaponeurosporenoate. This is a step in the biosynthesis of staphyloxanthin, an orange pigment present in most staphylococci strains. In Staphylococcus aureus (strain USA300), this protein is 4,4'-diaponeurosporenoate glycosyltransferase (crtQ).